Reading from the N-terminus, the 344-residue chain is Anthranilate phosphoribosyltransferase (344 aa).

5-phospho-alpha-D-ribose 1-diphosphate is bound by residues Gly-81, 84 to 85 (GD), Ser-89, 91 to 94 (NIST), 109 to 117 (KHGNRALSS), and Ala-121. Residue Gly-81 coordinates anthranilate. Ser-93 provides a ligand contact to Mg(2+). Asn-112 contributes to the anthranilate binding site. Arg-167 contacts anthranilate. Mg(2+)-binding residues include Asp-226 and Glu-227.

Belongs to the anthranilate phosphoribosyltransferase family. Homodimer. Mg(2+) is required as a cofactor.

The enzyme catalyses N-(5-phospho-beta-D-ribosyl)anthranilate + diphosphate = 5-phospho-alpha-D-ribose 1-diphosphate + anthranilate. Its pathway is amino-acid biosynthesis; L-tryptophan biosynthesis; L-tryptophan from chorismate: step 2/5. In terms of biological role, catalyzes the transfer of the phosphoribosyl group of 5-phosphorylribose-1-pyrophosphate (PRPP) to anthranilate to yield N-(5'-phosphoribosyl)-anthranilate (PRA). In Xanthobacter autotrophicus (strain ATCC BAA-1158 / Py2), this protein is Anthranilate phosphoribosyltransferase.